A 685-amino-acid polypeptide reads, in one-letter code: Methionine--tRNA ligase (685 aa).

A 'HIGH' region motif is present at residues 12-22 (PYANGSIHLGH). C143, C146, C156, and C159 together coordinate Zn(2+). The 'KMSKS' region signature appears at 339-343 (KMSKS). Residue K342 coordinates ATP. Positions 582–685 (DFMKIDMRVA…AGAQPGDKVG (104 aa)) constitute a tRNA-binding domain.

It belongs to the class-I aminoacyl-tRNA synthetase family. MetG type 1 subfamily. As to quaternary structure, homodimer. Zn(2+) is required as a cofactor.

The protein localises to the cytoplasm. It catalyses the reaction tRNA(Met) + L-methionine + ATP = L-methionyl-tRNA(Met) + AMP + diphosphate. Is required not only for elongation of protein synthesis but also for the initiation of all mRNA translation through initiator tRNA(fMet) aminoacylation. The polypeptide is Methionine--tRNA ligase (Neisseria meningitidis serogroup C (strain 053442)).